Here is a 174-residue protein sequence, read N- to C-terminus: Protein MOTHER of FT and TFL1 homolog 2 (174 aa).

Belongs to the phosphatidylethanolamine-binding protein family.

May form complexes with phosphorylated ligands by interfering with kinases and their effectors. The protein is Protein MOTHER of FT and TFL1 homolog 2 of Oryza sativa subsp. japonica (Rice).